The chain runs to 208 residues: V-type ATP synthase subunit E (208 aa).

The protein belongs to the V-ATPase E subunit family.

Its function is as follows. Produces ATP from ADP in the presence of a proton gradient across the membrane. This chain is V-type ATP synthase subunit E, found in Chlamydia felis (strain Fe/C-56) (Chlamydophila felis).